We begin with the raw amino-acid sequence, 168 residues long: Lipid transfer protein EARLI 1 (168 aa).

An N-terminal signal peptide occupies residues 1–25; that stretch reads MASKNSASIALFFALNIIFFTLTAA. The segment at 32-81 is disordered; the sequence is PSPKHKPVPSPKPKPVPSPKPKPVPSPSVPSPSVPSPNPRPVTPPRTPGS. One copy of the A-1 repeat lies at 34–41; the sequence is PKHKPVPS. The tract at residues 34-57 is 3 X 8 AA repeats A of P-K-[HP]-K-P-V-P-S; sequence PKHKPVPSPKPKPVPSPKPKPVPS. A compositionally biased stretch (pro residues) spans 39-78; that stretch reads VPSPKPKPVPSPKPKPVPSPSVPSPSVPSPNPRPVTPPRT. One copy of the A-2 repeat lies at 42-49; that stretch reads PKPKPVPS. The stretch at 50 to 57 is one A-3 repeat; sequence PKPKPVPS. The B-1 repeat unit spans residues 58–62; sequence PSVPS. A 2 X 58 AA tandem repeats B of P-S-V-P-S region spans residues 58–67; sequence PSVPSPSVPS. One copy of the B-2 repeat lies at 63 to 67; that stretch reads PSVPS.

This sequence belongs to the plant LTP family. PEARLI1 subfamily. In terms of tissue distribution, mostly expressed in aerial part of seedlings, and, to a lower extent, in roots. Higher basal levels in early-flowering ecotypes.

The protein resides in the secreted. It localises to the cell wall. Its function is as follows. Probable lipid transfer protein (LTP). May improve freezing survival. Seems to control the flowering process and lignin synthesis. Has an auxiliary role for germinability and early seedling development under low temperature and salt stress conditions, probably in an abscisic acid- (ABA) dependent manner. Confers resistance to Botrytis cinerea and exhibits anti-fungal activity, at least against S.cerevisiae, B.cinerea and Fusarium oxysporum, probably by increasing their membrane permeability. The polypeptide is Lipid transfer protein EARLI 1 (EARLI1) (Arabidopsis thaliana (Mouse-ear cress)).